Consider the following 101-residue polypeptide: Small ribosomal subunit protein uS14 (101 aa).

Belongs to the universal ribosomal protein uS14 family. In terms of assembly, part of the 30S ribosomal subunit. Contacts proteins S3 and S10.

In terms of biological role, binds 16S rRNA, required for the assembly of 30S particles and may also be responsible for determining the conformation of the 16S rRNA at the A site. The chain is Small ribosomal subunit protein uS14 from Burkholderia multivorans (strain ATCC 17616 / 249).